The sequence spans 128 residues: Small ribosomal subunit protein uS11 (128 aa).

This sequence belongs to the universal ribosomal protein uS11 family. Part of the 30S ribosomal subunit. Interacts with proteins S7 and S18. Binds to IF-3.

In terms of biological role, located on the platform of the 30S subunit, it bridges several disparate RNA helices of the 16S rRNA. Forms part of the Shine-Dalgarno cleft in the 70S ribosome. This chain is Small ribosomal subunit protein uS11, found in Synechococcus sp. (strain JA-3-3Ab) (Cyanobacteria bacterium Yellowstone A-Prime).